A 66-amino-acid polypeptide reads, in one-letter code: Large ribosomal subunit protein uL29 (66 aa).

It belongs to the universal ribosomal protein uL29 family. Part of the 50S ribosomal subunit.

This Thermococcus kodakarensis (strain ATCC BAA-918 / JCM 12380 / KOD1) (Pyrococcus kodakaraensis (strain KOD1)) protein is Large ribosomal subunit protein uL29.